The primary structure comprises 433 residues: Enolase (433 aa).

(2R)-2-phosphoglycerate is bound at residue Q166. E208 (proton donor) is an active-site residue. Mg(2+)-binding residues include D245, E290, and D317. 4 residues coordinate (2R)-2-phosphoglycerate: K342, R371, S372, and K393. Residue K342 is the Proton acceptor of the active site.

Belongs to the enolase family. Requires Mg(2+) as cofactor.

Its subcellular location is the cytoplasm. It is found in the secreted. It localises to the cell surface. The enzyme catalyses (2R)-2-phosphoglycerate = phosphoenolpyruvate + H2O. It participates in carbohydrate degradation; glycolysis; pyruvate from D-glyceraldehyde 3-phosphate: step 4/5. Its function is as follows. Catalyzes the reversible conversion of 2-phosphoglycerate (2-PG) into phosphoenolpyruvate (PEP). It is essential for the degradation of carbohydrates via glycolysis. This Clostridium novyi (strain NT) protein is Enolase.